The primary structure comprises 305 residues: UDP-N-acetylenolpyruvoylglucosamine reductase 2 (305 aa).

Positions 33-197 constitute an FAD-binding PCMH-type domain; that stretch reads VGGKADVFVA…LEARFELEEG (165 aa). The active site involves Arg176. The active-site Proton donor is Ser226. The active site involves Glu296.

Belongs to the MurB family. FAD serves as cofactor.

It localises to the cytoplasm. The enzyme catalyses UDP-N-acetyl-alpha-D-muramate + NADP(+) = UDP-N-acetyl-3-O-(1-carboxyvinyl)-alpha-D-glucosamine + NADPH + H(+). It functions in the pathway cell wall biogenesis; peptidoglycan biosynthesis. Cell wall formation. The sequence is that of UDP-N-acetylenolpyruvoylglucosamine reductase 2 (murB2) from Bacillus cereus (strain ATCC 14579 / DSM 31 / CCUG 7414 / JCM 2152 / NBRC 15305 / NCIMB 9373 / NCTC 2599 / NRRL B-3711).